The chain runs to 169 residues: Probable NADH dehydrogenase [ubiquinone] 1 alpha subcomplex subunit 5, mitochondrial (169 aa).

The transit peptide at 1 to 11 (MFLRAIGRPLL) directs the protein to the mitochondrion.

Belongs to the complex I NDUFA5 subunit family. Complex I is composed of at least 49 different subunits.

It localises to the mitochondrion inner membrane. Functionally, accessory subunit of the mitochondrial membrane respiratory chain NADH dehydrogenase (Complex I), that is believed not to be involved in catalysis. Complex I functions in the transfer of electrons from NADH to the respiratory chain. The immediate electron acceptor for the enzyme is believed to be ubiquinone. The sequence is that of Probable NADH dehydrogenase [ubiquinone] 1 alpha subcomplex subunit 5, mitochondrial from Arabidopsis thaliana (Mouse-ear cress).